A 542-amino-acid polypeptide reads, in one-letter code: N-substituted formamide deformylase (542 aa).

The propeptide occupies 1–2 (MT).

As to quaternary structure, homodimer. Zn(2+) serves as cofactor.

It carries out the reaction N-benzylformamide + H2O = benzylamine + formate. With respect to regulation, completely inhibited by HgCl(2), CuCl, CuCl(2) and AgNO(3). Partially inhibited by ZnCl(2) and SnCl(2). Almost completely inhibited by the reducing reagent DTT. Partially inhibited by phenylhydrazine. Moderately inhibited by phenanthroline and 8-hydroxyquinoline. Completely inhibited by the thiol-specific inhibitors N-ethylmaleimide and p-chloromercuribenzoate. Not inhibited by the carbonyl-specific inhibitors aminoguanidine and semicarbazide, the chelating agents alpha,alpha'-dipyridyl, KCN, diethyldithiocarbamate and EDTA, or the oxidizing reagents and serine-modifying reagents such as H(2)O(2), ammonium persulfate, phenylmethanesulfonyl fluoride and diisopropyl fluorophosphates. Hydrolyzes N-substituted formamides, but not amides. N-benzylformamide is the preferred substrate, while N-butylformamide is hydrolyzed at a much lower rate. Has very low activity towards allylformamide, N-(2-cyclohex-1-enylethyl)formamide and N-(alpha-methylbenzyl)formamide. This chain is N-substituted formamide deformylase, found in Arthrobacter pascens.